We begin with the raw amino-acid sequence, 149 residues long: Large ribosomal subunit protein uL24 (149 aa).

This sequence belongs to the universal ribosomal protein uL24 family. Part of the 50S ribosomal subunit.

Functionally, one of two assembly initiator proteins, it binds directly to the 5'-end of the 23S rRNA, where it nucleates assembly of the 50S subunit. Its function is as follows. Located at the polypeptide exit tunnel on the outside of the subunit. The chain is Large ribosomal subunit protein uL24 from Hyperthermus butylicus (strain DSM 5456 / JCM 9403 / PLM1-5).